The primary structure comprises 659 residues: Methionine--tRNA ligase (659 aa).

Positions 13–23 match the 'HIGH' region motif; it reads YYPSGNLHIGH. A 'KMSKS' region motif is present at residues 308-312; it reads KMSKS. Lys-311 lines the ATP pocket. The tRNA-binding domain occupies 559 to 659; it reads DFDKVEIKAA…SAIPNGAVIK (101 aa).

This sequence belongs to the class-I aminoacyl-tRNA synthetase family. MetG type 2B subfamily. Homodimer.

The protein resides in the cytoplasm. It catalyses the reaction tRNA(Met) + L-methionine + ATP = L-methionyl-tRNA(Met) + AMP + diphosphate. Functionally, is required not only for elongation of protein synthesis but also for the initiation of all mRNA translation through initiator tRNA(fMet) aminoacylation. The chain is Methionine--tRNA ligase from Staphylococcus haemolyticus (strain JCSC1435).